Reading from the N-terminus, the 427-residue chain is UDP-N-acetylglucosamine--N-acetylmuramyl-(pentapeptide) pyrophosphoryl-undecaprenol N-acetylglucosamine transferase (427 aa).

Residues 29–31 (TGG), asparagine 141, arginine 177, serine 205, isoleucine 258, and glutamine 303 each bind UDP-N-acetyl-alpha-D-glucosamine. Positions 408 to 427 (SLHPIPDSRFPIRTSAGGAQ) are disordered.

Belongs to the glycosyltransferase 28 family. MurG subfamily.

It localises to the cell inner membrane. The enzyme catalyses di-trans,octa-cis-undecaprenyl diphospho-N-acetyl-alpha-D-muramoyl-L-alanyl-D-glutamyl-meso-2,6-diaminopimeloyl-D-alanyl-D-alanine + UDP-N-acetyl-alpha-D-glucosamine = di-trans,octa-cis-undecaprenyl diphospho-[N-acetyl-alpha-D-glucosaminyl-(1-&gt;4)]-N-acetyl-alpha-D-muramoyl-L-alanyl-D-glutamyl-meso-2,6-diaminopimeloyl-D-alanyl-D-alanine + UDP + H(+). Its pathway is cell wall biogenesis; peptidoglycan biosynthesis. Cell wall formation. Catalyzes the transfer of a GlcNAc subunit on undecaprenyl-pyrophosphoryl-MurNAc-pentapeptide (lipid intermediate I) to form undecaprenyl-pyrophosphoryl-MurNAc-(pentapeptide)GlcNAc (lipid intermediate II). This chain is UDP-N-acetylglucosamine--N-acetylmuramyl-(pentapeptide) pyrophosphoryl-undecaprenol N-acetylglucosamine transferase, found in Xanthomonas campestris pv. campestris (strain 8004).